The following is a 49-amino-acid chain: Large ribosomal subunit protein bL33B (49 aa).

Belongs to the bacterial ribosomal protein bL33 family.

The chain is Large ribosomal subunit protein bL33B from Bacillus cytotoxicus (strain DSM 22905 / CIP 110041 / 391-98 / NVH 391-98).